Consider the following 406-residue polypeptide: S-adenosylmethionine synthase (406 aa).

H17 contacts ATP. Mg(2+) is bound at residue D19. E45 contacts K(+). Positions 58 and 101 each coordinate L-methionine. The interval Q101 to R111 is flexible loop. Residues D178–K180, D258, R264–K265, A281, and K285 contribute to the ATP site. An L-methionine-binding site is contributed by D258. K289 is an L-methionine binding site.

It belongs to the AdoMet synthase family. Homotetramer; dimer of dimers. It depends on Mg(2+) as a cofactor. The cofactor is K(+).

It is found in the cytoplasm. The catalysed reaction is L-methionine + ATP + H2O = S-adenosyl-L-methionine + phosphate + diphosphate. The protein operates within amino-acid biosynthesis; S-adenosyl-L-methionine biosynthesis; S-adenosyl-L-methionine from L-methionine: step 1/1. Catalyzes the formation of S-adenosylmethionine (AdoMet) from methionine and ATP. The overall synthetic reaction is composed of two sequential steps, AdoMet formation and the subsequent tripolyphosphate hydrolysis which occurs prior to release of AdoMet from the enzyme. This Bifidobacterium longum subsp. infantis (strain ATCC 15697 / DSM 20088 / JCM 1222 / NCTC 11817 / S12) protein is S-adenosylmethionine synthase.